Here is a 494-residue protein sequence, read N- to C-terminus: Cytochrome P450 2G1 (494 aa).

Cys439 contacts heme.

It belongs to the cytochrome P450 family. It depends on heme as a cofactor. In terms of tissue distribution, olfactory epithelium.

The protein resides in the endoplasmic reticulum membrane. Its subcellular location is the microsome membrane. The enzyme catalyses an organic molecule + reduced [NADPH--hemoprotein reductase] + O2 = an alcohol + oxidized [NADPH--hemoprotein reductase] + H2O + H(+). In terms of biological role, cytochromes P450 are a group of heme-thiolate monooxygenases. This isozyme seems to be implicated in olfaction. In Oryctolagus cuniculus (Rabbit), this protein is Cytochrome P450 2G1 (CYP2G1).